We begin with the raw amino-acid sequence, 492 residues long: N-succinylglutamate 5-semialdehyde dehydrogenase (492 aa).

220–225 (GRANTG) is a binding site for NAD(+). Catalysis depends on residues glutamate 243 and cysteine 277.

The protein belongs to the aldehyde dehydrogenase family. AstD subfamily.

It carries out the reaction N-succinyl-L-glutamate 5-semialdehyde + NAD(+) + H2O = N-succinyl-L-glutamate + NADH + 2 H(+). The protein operates within amino-acid degradation; L-arginine degradation via AST pathway; L-glutamate and succinate from L-arginine: step 4/5. In terms of biological role, catalyzes the NAD-dependent reduction of succinylglutamate semialdehyde into succinylglutamate. The chain is N-succinylglutamate 5-semialdehyde dehydrogenase from Shigella boydii serotype 4 (strain Sb227).